The sequence spans 473 residues: MKTLYSLRRFYHVETLFNGTLALAGRDQETTGFAWWAGNARLINLSGKLLGAHVAHAGLIVFWAGAMNLFEVAHFVPEKPMYEQGLILLPHLATLGWGVGPGGEVIDTFPYFVSGVLHLISSAVLGFGGIYHALLGPETLEESFPFFGYVWKDRNKMTTILGIHLILLGIGAFLLVFKALYFGGVYDTWAPGGGDVRKITNLTLSPSVIFGYLLKSPFGGEGWIVSVDDLEDIIGGHVWLGSICIFGGIWHILTKPFAWARRALVWSGEAYLSYSLAALSVCGFIACCFVWFNNTAYPSEFYGPTGPEASQAQAFTFLVRDQRLGANVGSAQGPTGLGKYLMRSPTGEVIFGGETMRFWDLRAPWLEPLRGPNGLDLSRLKKDIQPWQERRSAEYMTHAPLGSLNSVGGVATEINAVNYVSPRSWLSTSHFVLGFFLFVGHLWHAGRARAAAAGFEKGIDRDFEPVLSMTPLN.

A propeptide spanning residues 1 to 14 is cleaved from the precursor; that stretch reads MKTLYSLRRFYHVE. At T15 the chain carries N-acetylthreonine. Phosphothreonine is present on T15. 5 consecutive transmembrane segments (helical) span residues 69 to 93, 134 to 155, 178 to 200, 255 to 275, and 291 to 312; these read LFEV…PHLA, LLGP…KDRN, KALY…RKIT, KPFA…LSYS, and WFNN…ASQA. E367 contacts [CaMn4O5] cluster. The helical transmembrane segment at 447-471 threads the bilayer; it reads RARAAAAGFEKGIDRDFEPVLSMTP.

The protein belongs to the PsbB/PsbC family. PsbC subfamily. PSII is composed of 1 copy each of membrane proteins PsbA, PsbB, PsbC, PsbD, PsbE, PsbF, PsbH, PsbI, PsbJ, PsbK, PsbL, PsbM, PsbT, PsbX, PsbY, PsbZ, Psb30/Ycf12, at least 3 peripheral proteins of the oxygen-evolving complex and a large number of cofactors. It forms dimeric complexes. It depends on Binds multiple chlorophylls and provides some of the ligands for the Ca-4Mn-5O cluster of the oxygen-evolving complex. It may also provide a ligand for a Cl- that is required for oxygen evolution. PSII binds additional chlorophylls, carotenoids and specific lipids. as a cofactor.

It is found in the plastid. The protein localises to the chloroplast thylakoid membrane. In terms of biological role, one of the components of the core complex of photosystem II (PSII). It binds chlorophyll and helps catalyze the primary light-induced photochemical processes of PSII. PSII is a light-driven water:plastoquinone oxidoreductase, using light energy to abstract electrons from H(2)O, generating O(2) and a proton gradient subsequently used for ATP formation. This is Photosystem II CP43 reaction center protein from Arabis hirsuta (Hairy rock-cress).